Consider the following 293-residue polypeptide: 4-hydroxy-tetrahydrodipicolinate synthase (293 aa).

Thr-45 provides a ligand contact to pyruvate. The active-site Proton donor/acceptor is Tyr-133. Lys-161 acts as the Schiff-base intermediate with substrate in catalysis. Pyruvate is bound at residue Ile-204.

It belongs to the DapA family. In terms of assembly, homotetramer; dimer of dimers.

The protein localises to the cytoplasm. It catalyses the reaction L-aspartate 4-semialdehyde + pyruvate = (2S,4S)-4-hydroxy-2,3,4,5-tetrahydrodipicolinate + H2O + H(+). It functions in the pathway amino-acid biosynthesis; L-lysine biosynthesis via DAP pathway; (S)-tetrahydrodipicolinate from L-aspartate: step 3/4. Its function is as follows. Catalyzes the condensation of (S)-aspartate-beta-semialdehyde [(S)-ASA] and pyruvate to 4-hydroxy-tetrahydrodipicolinate (HTPA). The polypeptide is 4-hydroxy-tetrahydrodipicolinate synthase (Yersinia pseudotuberculosis serotype I (strain IP32953)).